Reading from the N-terminus, the 490-residue chain is Cytochrome P450 2C8 (490 aa).

3 residues coordinate substrate: serine 100, asparagine 204, and arginine 241. Position 100 is a phosphoserine (serine 100). A heme-binding site is contributed by cysteine 435.

It belongs to the cytochrome P450 family. It depends on heme as a cofactor.

The protein resides in the endoplasmic reticulum membrane. It localises to the microsome membrane. It carries out the reaction an organic molecule + reduced [NADPH--hemoprotein reductase] + O2 = an alcohol + oxidized [NADPH--hemoprotein reductase] + H2O + H(+). It catalyses the reaction (5Z,8Z,11Z,14Z)-eicosatetraenoate + reduced [NADPH--hemoprotein reductase] + O2 = (11R,12S)-epoxy-(5Z,8Z,14Z)-eicosatrienoate + oxidized [NADPH--hemoprotein reductase] + H2O + H(+). The catalysed reaction is (5Z,8Z,11Z,14Z)-eicosatetraenoate + reduced [NADPH--hemoprotein reductase] + O2 = (11S,12R)-epoxy-(5Z,8Z,14Z)-eicosatrienoate + oxidized [NADPH--hemoprotein reductase] + H2O + H(+). The enzyme catalyses (5Z,8Z,11Z,14Z)-eicosatetraenoate + reduced [NADPH--hemoprotein reductase] + O2 = (14R,15S)-epoxy-(5Z,8Z,11Z)-eicosatrienoate + oxidized [NADPH--hemoprotein reductase] + H2O + H(+). It carries out the reaction (5Z,8Z,11Z,14Z)-eicosatetraenoate + reduced [NADPH--hemoprotein reductase] + O2 = (14S,15R)-epoxy-(5Z,8Z,11Z)-eicosatrienoate + oxidized [NADPH--hemoprotein reductase] + H2O + H(+). It catalyses the reaction (5Z,8Z,11Z,14Z,17Z)-eicosapentaenoate + reduced [NADPH--hemoprotein reductase] + O2 = 11,12-epoxy-(5Z,8Z,14Z,17Z)-eicosatetraenoate + oxidized [NADPH--hemoprotein reductase] + H2O + H(+). The catalysed reaction is (5Z,8Z,11Z,14Z,17Z)-eicosapentaenoate + reduced [NADPH--hemoprotein reductase] + O2 = 14,15-epoxy-(5Z,8Z,11Z,17Z)-eicosatetraenoate + oxidized [NADPH--hemoprotein reductase] + H2O + H(+). The enzyme catalyses (5Z,8Z,11Z,14Z,17Z)-eicosapentaenoate + reduced [NADPH--hemoprotein reductase] + O2 = (17R,18S)-epoxy-(5Z,8Z,11Z,14Z)-eicosatetraenoate + oxidized [NADPH--hemoprotein reductase] + H2O + H(+). It carries out the reaction (5Z,8Z,11Z,14Z,17Z)-eicosapentaenoate + reduced [NADPH--hemoprotein reductase] + O2 = (17S,18R)-epoxy-(5Z,8Z,11Z,14Z)-eicosatetraenoate + oxidized [NADPH--hemoprotein reductase] + H2O + H(+). It catalyses the reaction (4Z,7Z,10Z,13Z,16Z,19Z)-docosahexaenoate + reduced [NADPH--hemoprotein reductase] + O2 = (19R,20S)-epoxy-(4Z,7Z,10Z,13Z,16Z)-docosapentaenoate + oxidized [NADPH--hemoprotein reductase] + H2O + H(+). The catalysed reaction is (4Z,7Z,10Z,13Z,16Z,19Z)-docosahexaenoate + reduced [NADPH--hemoprotein reductase] + O2 = (19S,20R)-epoxy-(4Z,7Z,10Z,13Z,16Z)-docosapentaenoate + oxidized [NADPH--hemoprotein reductase] + H2O + H(+). The enzyme catalyses all-trans-retinoate + reduced [NADPH--hemoprotein reductase] + O2 = all-trans-4-hydroxyretinoate + oxidized [NADPH--hemoprotein reductase] + H2O + H(+). It carries out the reaction 17beta-estradiol + reduced [NADPH--hemoprotein reductase] + O2 = 16alpha,17beta-estriol + oxidized [NADPH--hemoprotein reductase] + H2O + H(+). It catalyses the reaction estrone + reduced [NADPH--hemoprotein reductase] + O2 = 16alpha-hydroxyestrone + oxidized [NADPH--hemoprotein reductase] + H2O + H(+). It participates in steroid metabolism. It functions in the pathway lipid metabolism; arachidonate metabolism. Its pathway is cofactor metabolism; retinol metabolism. Its function is as follows. A cytochrome P450 monooxygenase involved in the metabolism of various endogenous substrates, including fatty acids, steroid hormones and vitamins. Mechanistically, uses molecular oxygen inserting one oxygen atom into a substrate, and reducing the second into a water molecule, with two electrons provided by NADPH via cytochrome P450 reductase (NADPH--hemoprotein reductase). Primarily catalyzes the epoxidation of double bonds of polyunsaturated fatty acids (PUFA) with a preference for the last double bond. Catalyzes the hydroxylation of carbon-hydrogen bonds. Metabolizes all trans-retinoic acid toward its 4-hydroxylated form. Displays 16-alpha hydroxylase activity toward estrogen steroid hormones, 17beta-estradiol (E2) and estrone (E1). Plays a role in the oxidative metabolism of xenobiotics. It is the principal enzyme responsible for the metabolism of the anti-cancer drug paclitaxel (taxol). The sequence is that of Cytochrome P450 2C8 from Homo sapiens (Human).